Consider the following 367-residue polypeptide: MSISSKIRPTPRKPSRMATDHSFKMKNFYADPFAISSISLAIVSWVIAIGGSISSASTNESFPRFTWWGIVYQFLTICSLMLFYCFDLVDHYRIFITTSIAVAFVYNTNSATNLVYADGSKKAAASAGVILLSIINLIWILYYGGDNASPTNRWIDSFSIKGIRPSPLENSLHRARRRGNRNTTPYQNNVYNDAIRDSGYATQFDGYPQQQPSHTNYVSSTALAGFENTQPNTSEAVNLHLNTLQQHINSASNAKETNDNSNNQTNTNIGNTFDTDFSNGNTETTMGDTLGLYSDIGDDNFIYKAKALYPYDADDDDAYEISFEQNEILQVSDIEGRWWKARRANGETGIIPSNYVQLIDGPEEMHR.

The Cytoplasmic portion of the chain corresponds to 1-32 (MSISSKIRPTPRKPSRMATDHSFKMKNFYADP). A helical transmembrane segment spans residues 33-53 (FAISSISLAIVSWVIAIGGSI). Topologically, residues 54 to 65 (SSASTNESFPRF) are extracellular. N59 carries N-linked (GlcNAc...) asparagine glycosylation. The helical transmembrane segment at 66–86 (TWWGIVYQFLTICSLMLFYCF) threads the bilayer. The Cytoplasmic portion of the chain corresponds to 87–93 (DLVDHYR). A helical membrane pass occupies residues 94–114 (IFITTSIAVAFVYNTNSATNL). Residues 115–122 (VYADGSKK) lie on the Extracellular side of the membrane. A helical transmembrane segment spans residues 123–143 (AAASAGVILLSIINLIWILYY). Topologically, residues 144–367 (GGDNASPTNR…LIDGPEEMHR (224 aa)) are cytoplasmic. At S166 the chain carries Phosphoserine. The interval 253-276 (NAKETNDNSNNQTNTNIGNTFDTD) is disordered. Residues 259–272 (DNSNNQTNTNIGNT) are compositionally biased toward low complexity. The SH3 domain occupies 300-361 (NFIYKAKALY…PSNYVQLIDG (62 aa)).

The protein belongs to the SHO1 family. In terms of assembly, forms homooligomers. Interacts (via the SH3 domain) with PBS2. Interacts with FUS1, STE11, STE50 and RNA polymerase II.

It is found in the cell membrane. The protein localises to the bud. The protein resides in the bud neck. It localises to the cell projection. In terms of biological role, plasma membrane osmosensor that activates the high osmolarity glycerol (HOG) MAPK signaling pathway in response to high osmolarity. Detects changes in external osmolarity and activates PBS2 through the stimulation of STE11 and targets PBS2 to the plasma membrane. PBS2 activation leads to changes in glycerol production that helps to balance the intracellular and external osmotic pressures. Activates also HOG1 in response to heat stress and mediates resistance to oxidative stress. Involved in the regulation of the mating pathway. May be a receptor that feeds into the pseudohyphal growth pathway. The polypeptide is High osmolarity signaling protein SHO1 (SHO1) (Saccharomyces cerevisiae (strain YJM789) (Baker's yeast)).